The primary structure comprises 35 residues: Mu-theraphotoxin-Pn3b (35 aa).

3 cysteine pairs are disulfide-bonded: Cys-2-Cys-16, Cys-9-Cys-21, and Cys-15-Cys-28.

It belongs to the neurotoxin 10 (Hwtx-1) family. 28 (Jztx-11) subfamily. In terms of tissue distribution, expressed by the venom gland.

It localises to the secreted. Gating-modifier toxin that targets voltage-gated sodium channels with a preferential activity on Nav1.7/SCN9A. On Nav1.7/SCN9A, the toxin acts by shifting the voltage-dependence of activation to more depolarized potentials, whereas it does not cause significant effect on the voltage-dependence of activation on other sodium channels. Minor effects are observed on the voltage-dependence of steady-state fast inactivation for all sodium channels tested (Nav1.1/SCN1A-Nav1.8/SCN10A). By testing the toxin on channel chimera, it has been shown to interact with the S3-S4 linkers in DII and DIV domains of Nav1.7/SCN9A. In vivo, the toxin dose-dependently reduces OD1-induced spontaneous pain behaviors. This is Mu-theraphotoxin-Pn3b from Pamphobeteus nigricolor (Giant blue bloom tarantula).